Here is a 942-residue protein sequence, read N- to C-terminus: Mitogen-activated protein kinase kinase kinase A (942 aa).

In terms of domain architecture, PB1 spans 15-96 (FIRIKCILGD…NPTKIISTKF (82 aa)). Residues 107–144 (PLSSSLSPTQSLILNNNNNNNNNNNNNNNNNNNNNNNN) are disordered. Positions 170–429 (WQKGQILGRG…ANQLLKHPFI (260 aa)) constitute a Protein kinase domain. ATP is bound by residues 176-184 (LGRGGYGSV) and lysine 199. Aspartate 297 serves as the catalytic Proton acceptor. The span at 441-486 (ISPTTTLSTNTTNTTATTTTTNNATNSNINQQQQQQQQQPPTRTQR) shows a compositional bias: low complexity. The segment at 441–512 (ISPTTTLSTN…ISTSTSSSSS (72 aa)) is disordered. Positions 487–498 (VSISAGSSNNKR) are enriched in polar residues. Low complexity predominate over residues 500–512 (TPPISTSTSSSSS). The chain crosses the membrane as a helical span at residues 513–533 (SILNNFSINIILPINLIILIF). The F-box domain occupies 518–564 (FSINIILPINLIILIFREIKPNFVNTLSRVCKHWKQIIDDDELWNKY). WD repeat units follow at residues 607–646 (GHDK…HHNH), 690–733 (GHSG…TLFT), 736–778 (NHQE…STLR), 780–825 (HTGG…KVRS), 828–865 (QHTE…TIST), 872–909 (RQKN…DSRS), and 912–942 (GHHE…WSID).

Belongs to the protein kinase superfamily. STE Ser/Thr protein kinase family. MAP kinase kinase kinase subfamily. In terms of assembly, interacts with ubcB and ubpB. Requires Mg(2+) as cofactor. Post-translationally, ubcB and ubpB differentially control ubiquitination/deubiquitination and degradation in a cell-type-specific and temporally regulated manner.

Its subcellular location is the membrane. It catalyses the reaction L-seryl-[protein] + ATP = O-phospho-L-seryl-[protein] + ADP + H(+). The enzyme catalyses L-threonyl-[protein] + ATP = O-phospho-L-threonyl-[protein] + ADP + H(+). In terms of biological role, regulates cell-type differentiation and spatial patterning, required for the proper induction and maintenance of prespore cell differentiation. This Dictyostelium discoideum (Social amoeba) protein is Mitogen-activated protein kinase kinase kinase A.